We begin with the raw amino-acid sequence, 211 residues long: Redox-sensing transcriptional repressor Rex (211 aa).

The H-T-H motif DNA-binding region spans 18-57 (LYYRFLKNLHASGKQRVSSAELSEAVKVDSATIRRDFSYF). 92-97 (GVGNLG) lines the NAD(+) pocket.

The protein belongs to the transcriptional regulatory Rex family. Homodimer.

The protein localises to the cytoplasm. Functionally, modulates transcription in response to changes in cellular NADH/NAD(+) redox state. The chain is Redox-sensing transcriptional repressor Rex from Anoxybacillus flavithermus (strain DSM 21510 / WK1).